Reading from the N-terminus, the 617-residue chain is BTB/POZ domain-containing protein At3g08570 (617 aa).

Residues 36–106 (GDITIVVDGE…CYGINFEITI (71 aa)) enclose the BTB domain. Residues 210 to 490 (EWWIEDLSAL…VRVLYSEQLR (281 aa)) form the NPH3 domain. At tyrosine 431 the chain carries Phosphotyrosine. 2 disordered regions span residues 505–525 (LSSQKHSSENPSRAVSPRDTY) and 585–617 (GGGPTEGKLRNANRKSKSRLERKTVRSRPESMF). The segment covering 602-617 (SRLERKTVRSRPESMF) has biased composition (basic and acidic residues).

It belongs to the NPH3 family.

The protein operates within protein modification; protein ubiquitination. Functionally, may act as a substrate-specific adapter of an E3 ubiquitin-protein ligase complex (CUL3-RBX1-BTB) which mediates the ubiquitination and subsequent proteasomal degradation of target proteins. The sequence is that of BTB/POZ domain-containing protein At3g08570 from Arabidopsis thaliana (Mouse-ear cress).